A 321-amino-acid polypeptide reads, in one-letter code: Lipoyl synthase (321 aa).

The [4Fe-4S] cluster site is built by Cys-68, Cys-73, Cys-79, Cys-94, Cys-98, Cys-101, and Ser-308. The 218-residue stretch at 80–297 folds into the Radical SAM core domain; it reads FNHGTATFMI…RVFAEEIGFT (218 aa).

The protein belongs to the radical SAM superfamily. Lipoyl synthase family. It depends on [4Fe-4S] cluster as a cofactor.

Its subcellular location is the cytoplasm. The enzyme catalyses [[Fe-S] cluster scaffold protein carrying a second [4Fe-4S](2+) cluster] + N(6)-octanoyl-L-lysyl-[protein] + 2 oxidized [2Fe-2S]-[ferredoxin] + 2 S-adenosyl-L-methionine + 4 H(+) = [[Fe-S] cluster scaffold protein] + N(6)-[(R)-dihydrolipoyl]-L-lysyl-[protein] + 4 Fe(3+) + 2 hydrogen sulfide + 2 5'-deoxyadenosine + 2 L-methionine + 2 reduced [2Fe-2S]-[ferredoxin]. The protein operates within protein modification; protein lipoylation via endogenous pathway; protein N(6)-(lipoyl)lysine from octanoyl-[acyl-carrier-protein]: step 2/2. Functionally, catalyzes the radical-mediated insertion of two sulfur atoms into the C-6 and C-8 positions of the octanoyl moiety bound to the lipoyl domains of lipoate-dependent enzymes, thereby converting the octanoylated domains into lipoylated derivatives. The chain is Lipoyl synthase from Shewanella woodyi (strain ATCC 51908 / MS32).